Reading from the N-terminus, the 700-residue chain is ATP-dependent DNA helicase UvrD2 (700 aa).

The UvrD-like helicase ATP-binding domain occupies 10-301; it reads AGLDDQQREA…VRLERDYRST (292 aa). ATP contacts are provided by residues 34–39 and arginine 299; that span reads GTGKTR. The UvrD-like helicase C-terminal domain maps to 302 to 553; that stretch reads PQVVSLANRV…LYVGITRARV (252 aa). Positions 565-595 are disordered; it reads PGGRQSRKPSRFLNGIAPQTRADPVPGTSRR. An HRDC domain is found at 626 to 700; the sequence is ADVDEELLLQ…DVLQLVRGRT (75 aa).

Belongs to the helicase family. UvrD subfamily. Requires Mg(2+) as cofactor.

It carries out the reaction Couples ATP hydrolysis with the unwinding of duplex DNA by translocating in the 3'-5' direction.. The enzyme catalyses ATP + H2O = ADP + phosphate + H(+). In terms of biological role, DNA-dependent ATPase, stimulated equally by ss- and dsDNA. Has both ATPase and helicase activities. In Mycobacterium bovis (strain ATCC BAA-935 / AF2122/97), this protein is ATP-dependent DNA helicase UvrD2 (uvrD2).